A 366-amino-acid chain; its full sequence is MAGSSVTPTPLLKDELDIVIPTIRNLDFLEMWRPFFQPYHLIIVQDGDPSKIINVPEGFDYELYNRNDINRILGPKASCISFKDSACRCFGYMVSKKKYIYTIDDDCFVAKDPSGKDINALEQHIKNLLCPSTPHFFNTLYDPYREGADFVRGYPFSMREGAATAVSHGLWLNIPDYDAPTQLVKPRERNTRYVDAVMTIPKGTLFPMCGMNLAFDRELIGPAMYFGLMGDGQPIGRYDDMWAGWCIKVICDHLGLGVKTGLPYIWHSKASNPFVNLKKEYKGIYWQEEIIPFSQSATLPKDCTSVQQCYLELSKQVKEKLSTIDPYFTKLADAMVTWIEAWDELNPTGEGLAKLPSRTAPESRLH.

Residues 104–106 (DDD) carry the DXD motif motif. N-linked (Glc...) arginine glycosylation is present at R152.

It belongs to the RGP family. As to quaternary structure, homopentamer or homohexamer. Mn(2+) is required as a cofactor. It depends on Mg(2+) as a cofactor. In terms of processing, reversibly glycosylated by UDP-glucose, UDP-xylose and UDP-galactose, but not UDP-mannose. Expressed in all tissues tested, including root, tuber, leaf, petiole, shoot, stolon and stem.

Its subcellular location is the secreted. It localises to the cell wall. The protein resides in the cell junction. It is found in the plasmodesma. The protein localises to the golgi apparatus. It catalyses the reaction UDP-beta-L-arabinofuranose = UDP-beta-L-arabinopyranose. Its function is as follows. Probable UDP-L-arabinose mutase involved in the biosynthesis of cell wall non-cellulosic polysaccharides. Was initially shown to possess an autoglycosylating activity which is dependent on the presence of UDP-glucose and manganese. In Solanum tuberosum (Potato), this protein is Probable UDP-arabinopyranose mutase 2.